Here is a 1166-residue protein sequence, read N- to C-terminus: Calcium-activated potassium channel subunit alpha-1 (1166 aa).

The span at methionine 1 to serine 15 shows a compositional bias: gly residues. Disordered stretches follow at residues methionine 1–serine 20 and leucine 30–glutamate 51. Over methionine 1–methionine 74 the chain is Extracellular. The span at serine 33–serine 48 shows a compositional bias: low complexity. Residues tryptophan 75–leucine 95 traverse the membrane as a helical segment. The Cytoplasmic portion of the chain corresponds to tryptophan 96–arginine 166. Residues cysteine 106, cysteine 107, and cysteine 109 are each lipidated (S-palmitoyl cysteine). At threonine 139 the chain carries Phosphothreonine; by CamK2. The chain crosses the membrane as a helical span at residues valine 167–serine 187. The Extracellular portion of the chain corresponds to serine 188–threonine 202. A helical transmembrane segment spans residues leucine 203–alanine 223. The Cytoplasmic segment spans residues alanine 224–lysine 227. Residues leucine 228 to valine 248 form a helical membrane-spanning segment. Over serine 249–leucine 252 the chain is Extracellular. A helical; Voltage-sensor membrane pass occupies residues asparagine 253–isoleucine 273. At leucine 274–leucine 288 the chain is on the cytoplasmic side. Residues valine 289–valine 309 form a helical membrane-spanning segment. Residues glutamate 310–glutamine 323 lie on the Extracellular side of the membrane. Positions alanine 324–valine 346 form an intramembrane region, pore-forming. A Selectivity for potassium motif is present at residues threonine 340 to tyrosine 343. Over tyrosine 347–leucine 355 the chain is Extracellular. A helical membrane pass occupies residues phenylalanine 356–isoleucine 376. Topologically, residues glutamate 377 to leucine 1166 are cytoplasmic. Residues arginine 395–isoleucine 537 form the RCK N-terminal 1 domain. Residues glutamate 427, glutamine 450, and glutamate 452 each coordinate Mg(2+). The tract at residues leucine 544–phenylalanine 564 is segment S7. Residues leucine 601–isoleucine 621 form a segment S8 region. Positions cysteine 665–histidine 669 are heme-binding motif. A disordered region spans residues glutamate 689 to arginine 717. Threonine 693 carries the post-translational modification Phosphothreonine. Residues serine 695, serine 708, and serine 712 each carry the phosphoserine modification. A segment S9 region spans residues valine 767–leucine 787. In terms of domain architecture, RCK N-terminal 2 spans serine 769–proline 913. Threonine 900 carries the post-translational modification Phosphothreonine. A phosphoserine mark is found at serine 908 and serine 912. The Calcium bowl motif lies at threonine 933–glutamate 955. Residues glutamine 942, aspartate 945, aspartate 948, and aspartate 950 each coordinate Ca(2+). The interval phenylalanine 962–phenylalanine 982 is segment S10. Over residues arginine 1116 to serine 1141 the composition is skewed to low complexity. A disordered region spans residues arginine 1116–leucine 1166. Residues lysine 1150–leucine 1166 show a composition bias toward basic and acidic residues. Serine 1151 and serine 1154 each carry phosphoserine; by PKG.

It belongs to the potassium channel family. Calcium-activated (TC 1.A.1.3) subfamily. KCa1.1/KCNMA1 sub-subfamily. As to quaternary structure, homotetramer; which constitutes the calcium-activated potassium channel. Interacts with beta subunits KCNMB1, KCNMB2, KCNMB3 and KCNMB4. Interacts with gamma subunits LRRC26, LRRC38, LRRC52 and LRRC55. Beta and gamma subunits are accessory, and modulate its activity. Interacts with RAB11B. Post-translationally, phosphorylated. Stimulated by PKG, but not by PKA. In smooth muscles, phosphorylation affects its activity. In terms of processing, phosphorylated. Exclusively stimulated by PKA. In smooth muscles, phosphorylation affects its activity. Incremental phosphorylation of Thr-139 of the KCNMA1 tetramer changes the response to ethanol from increased activation to inhibition of channel activity. Post-translationally, palmitoylation by ZDHHC22 and ZDHHC23 within the intracellular linker between the S0 and S1 transmembrane domains regulates localization to the plasma membrane. Depalmitoylated by LYPLA1 and LYPLAL1, leading to retard exit from the trans-Golgi network.

The protein resides in the cell membrane. It catalyses the reaction K(+)(in) = K(+)(out). Ethanol and carbon monoxide-bound heme increase channel activation. Heme inhibits channel activation. Phosphorylation of Thr-139 leads to inhibition of channel activity by ethanol. Functionally, potassium channel activated by both membrane depolarization or increase in cytosolic Ca(2+) that mediates export of K(+). It is also activated by concentration of cytosolic Mg(2+). Its activation dampens the excitatory events that elevate the cytosolic Ca(2+) concentration and/or depolarize the cell membrane. It therefore contributes to repolarization of the membrane potential. Plays a key role in controlling excitability in a number of systems, such as regulation of the contraction of smooth muscle, the tuning of hair cells in the cochlea, regulation of transmitter release, and innate immunity. In smooth muscles, its activation by high level of Ca(2+), caused by ryanodine receptors in the sarcoplasmic reticulum, regulates the membrane potential. In cochlea cells, its number and kinetic properties partly determine the characteristic frequency of each hair cell and thereby helps to establish a tonotopic map. Kinetics of KCNMA1 channels are determined by alternative splicing, phosphorylation status and its combination with modulating beta subunits. Highly sensitive to both iberiotoxin (IbTx) and charybdotoxin (CTX). The polypeptide is Calcium-activated potassium channel subunit alpha-1 (KCNMA1) (Bos taurus (Bovine)).